We begin with the raw amino-acid sequence, 285 residues long: Transcription factor LBX1 (285 aa).

A compositionally biased stretch (basic and acidic residues) spans M1 to L20. Residues M1 to F36 form a disordered region. The homeobox DNA-binding region spans R125–L184. Positions E212–D285 are disordered. Residues S218–G230 are compositionally biased toward gly residues. Residues C272–D285 show a composition bias toward acidic residues.

As to quaternary structure, interacts with SKOR1 which acts as a transcriptional corepressor.

The protein resides in the nucleus. Its function is as follows. Transcription factor required for the development of GABAergic interneurons in the dorsal horn of the spinal cord and migration and further development of hypaxial muscle precursor cells for limb muscles, diaphragm and hypoglossal cord. The chain is Transcription factor LBX1 from Rattus norvegicus (Rat).